The chain runs to 357 residues: Ribosomal RNA small subunit methyltransferase C (357 aa).

The protein belongs to the methyltransferase superfamily. RsmC family. As to quaternary structure, monomer.

The protein localises to the cytoplasm. The enzyme catalyses guanosine(1207) in 16S rRNA + S-adenosyl-L-methionine = N(2)-methylguanosine(1207) in 16S rRNA + S-adenosyl-L-homocysteine + H(+). Its function is as follows. Specifically methylates the guanine in position 1207 of 16S rRNA in the 30S particle. The polypeptide is Ribosomal RNA small subunit methyltransferase C (Colwellia psychrerythraea (strain 34H / ATCC BAA-681) (Vibrio psychroerythus)).